The following is a 143-amino-acid chain: Endoribonuclease YbeY (143 aa).

3 residues coordinate Zn(2+): histidine 109, histidine 113, and histidine 119.

It belongs to the endoribonuclease YbeY family. Zn(2+) serves as cofactor.

Its subcellular location is the cytoplasm. Its function is as follows. Single strand-specific metallo-endoribonuclease involved in late-stage 70S ribosome quality control and in maturation of the 3' terminus of the 16S rRNA. This Neorickettsia sennetsu (strain ATCC VR-367 / Miyayama) (Ehrlichia sennetsu) protein is Endoribonuclease YbeY.